The primary structure comprises 485 residues: Glutamyl-tRNA(Gln) amidotransferase subunit A (485 aa).

Residues lysine 75 and serine 150 each act as charge relay system in the active site. The active-site Acyl-ester intermediate is the serine 174.

The protein belongs to the amidase family. GatA subfamily. As to quaternary structure, heterotrimer of A, B and C subunits.

It carries out the reaction L-glutamyl-tRNA(Gln) + L-glutamine + ATP + H2O = L-glutaminyl-tRNA(Gln) + L-glutamate + ADP + phosphate + H(+). Allows the formation of correctly charged Gln-tRNA(Gln) through the transamidation of misacylated Glu-tRNA(Gln) in organisms which lack glutaminyl-tRNA synthetase. The reaction takes place in the presence of glutamine and ATP through an activated gamma-phospho-Glu-tRNA(Gln). This Picosynechococcus sp. (strain ATCC 27264 / PCC 7002 / PR-6) (Agmenellum quadruplicatum) protein is Glutamyl-tRNA(Gln) amidotransferase subunit A.